Here is a 187-residue protein sequence, read N- to C-terminus: Chlorobenzene dioxygenase subunit beta (187 aa).

The protein belongs to the bacterial ring-hydroxylating dioxygenase beta subunit family. As to quaternary structure, this dioxygenase system consists of four proteins: the two subunits of the oxygenase component (TecA1 and TecA2), a ferredoxin (TecA3) and a ferredoxin reductase (TecA4).

It catalyses the reaction chlorobenzene + NADH + O2 + H(+) = (1R,2R)-3-chlorocyclohexa-3,5-diene-1,2-diol + NAD(+). It functions in the pathway aromatic compound metabolism. In terms of biological role, part of the oxygenase component of the chlorobenzene dioxygenase system that catalyzes the dihydroxylation of a range of aromatic compounds, including chlorinated benzenes and toluenes, and dinuclear aromatics such as biphenyl and dibenzo-p-dioxin. The beta subunit is not directly involved in the control of substrate specificity. This chain is Chlorobenzene dioxygenase subunit beta, found in Cupriavidus sp. (strain PS12).